A 1123-amino-acid chain; its full sequence is Translation initiation factor IF-2 (1123 aa).

2 disordered regions span residues 52–452 and 480–512; these read LLKA…KVHI and LARP…RQRQ. Low complexity-rich tracts occupy residues 54–73, 94–113, and 121–133; these read KAGS…PGKA, KPAA…AKSP, and AAPS…KASA. Positions 170-187 are enriched in pro residues; that stretch reads PPSPPARPVPQQPSPPSA. Residues 193–206 are compositionally biased toward low complexity; it reads APIRRAAPNDAPRP. 2 stretches are compositionally biased toward pro residues: residues 207-217 and 258-268; these read ANAPPSRPQPK and SPRPAVSPRPS. A compositionally biased stretch (low complexity) spans 285–304; that stretch reads RPGAPTRPGTGAGRPSRPGG. Residues 320–339 are compositionally biased toward gly residues; it reads GNRGEGGRPPGGARPAGGGN. Positions 388–403 are enriched in pro residues; the sequence is ATPPVSRPTATPPSPA. Residues 412–422 show a composition bias toward gly residues; sequence FRPGAGPGGQR. Basic and acidic residues predominate over residues 425–439; the sequence is GRPDWDDSAKLDALR. Over residues 486–499 the composition is skewed to low complexity; it reads PKSQQKAAPKPVAA. Basic residues predominate over residues 500 to 512; it reads MRKRRKETTRQRQ. Positions 615–787 constitute a tr-type G domain; sequence RRPPVVTVMG…LLLVTEVEDL (173 aa). The interval 624 to 631 is G1; that stretch reads GHVDHGKT. 624–631 contacts GTP; sequence GHVDHGKT. Positions 649-653 are G2; sequence GITQH. Residues 674 to 677 form a G3 region; the sequence is DTPG. Residues 674 to 678 and 728 to 731 contribute to the GTP site; these read DTPGH and NKID. The interval 728-731 is G4; sequence NKID. Residues 764-766 are G5; sequence SAI.

Belongs to the TRAFAC class translation factor GTPase superfamily. Classic translation factor GTPase family. IF-2 subfamily.

It is found in the cytoplasm. Its function is as follows. One of the essential components for the initiation of protein synthesis. Protects formylmethionyl-tRNA from spontaneous hydrolysis and promotes its binding to the 30S ribosomal subunits. Also involved in the hydrolysis of GTP during the formation of the 70S ribosomal complex. In Synechococcus sp. (strain WH7803), this protein is Translation initiation factor IF-2.